The following is a 140-amino-acid chain: Respiratory supercomplex factor 1, mitochondrial (140 aa).

The region spanning Met-1 to Arg-79 is the HIG1 domain. 2 helical membrane passes run Leu-16–Ala-32 and Tyr-46–Tyr-68. Positions Tyr-68–Gly-126 form a coiled coil.

It belongs to the RCF1 family. As to quaternary structure, associates with the respiratory chain complex III/complex IV supercomplex.

Its subcellular location is the mitochondrion membrane. In terms of biological role, cytochrome c oxidase subunit which plays a role in assembly of respiratory supercomplexes. The sequence is that of Respiratory supercomplex factor 1, mitochondrial (RCF1) from Clavispora lusitaniae (strain ATCC 42720) (Yeast).